The following is a 79-amino-acid chain: D-alanyl carrier protein (79 aa).

The Carrier domain occupies 2 to 79 (AEFKEQVLDI…MVIKKLEEIR (78 aa)). Serine 37 carries the post-translational modification O-(pantetheine 4'-phosphoryl)serine.

The protein belongs to the DltC family. 4'-phosphopantetheine is transferred from CoA to a specific serine of apo-DCP.

It localises to the cytoplasm. It participates in cell wall biogenesis; lipoteichoic acid biosynthesis. Carrier protein involved in the D-alanylation of lipoteichoic acid (LTA). The loading of thioester-linked D-alanine onto DltC is catalyzed by D-alanine--D-alanyl carrier protein ligase DltA. The DltC-carried D-alanyl group is further transferred to cell membrane phosphatidylglycerol (PG) by forming an ester bond, probably catalyzed by DltD. D-alanylation of LTA plays an important role in modulating the properties of the cell wall in Gram-positive bacteria, influencing the net charge of the cell wall. The chain is D-alanyl carrier protein from Bacillus mycoides (strain KBAB4) (Bacillus weihenstephanensis).